A 908-amino-acid chain; its full sequence is DNA (cytosine-5)-methyltransferase 3A (908 aa).

The span at 1-13 (MPSSGPGDTSSSS) shows a compositional bias: low complexity. Disordered stretches follow at residues 1–183 (MPSS…PMPR) and 226–281 (NQAS…PEYE). A compositionally biased stretch (basic and acidic residues) spans 14–37 (LEREDDRKEGEEQEENRGKEERQE). Basic residues predominate over residues 44–54 (KVGRPGRKRKH). Positions 69–80 (TTKSQPMAQDSG) are enriched in polar residues. At Ser102 the chain carries Phosphoserine. Residues 110–124 (GAPAEGEGTETPPEA) show a composition bias toward low complexity. Residue Thr120 is modified to Phosphothreonine. A Glycyl lysine isopeptide (Lys-Gly) (interchain with G-Cter in SUMO2) cross-link involves residue Lys158. Arg167 is modified (omega-N-methylarginine). The interval 195–399 (SKRKRDEWLA…DSGKAVEVQN (205 aa)) is interaction with DNMT1 and DNMT3B. Residues Ser239 and Ser251 each carry the phosphoserine modification. The span at 242 to 256 (AVQQPTDPASPTVAT) shows a compositional bias: polar residues. Thr257 is modified (phosphothreonine). Residues 265 to 275 (AGDKNATKAAD) are compositionally biased toward basic and acidic residues. The PWWP domain occupies 288-346 (IGELVWGKLRGFSWWPGRIVSWWMTGRSRAAEGTRWVMWFGDGKFSVVCVEKLMPLSSF). Ser386 and Ser389 each carry phosphoserine. Positions 443-462 (AYAPPPPAKKPRKSTTEKPK) are disordered. The 133-residue stretch at 478–610 (EVRQKCRNIE…LQMFFANNHD (133 aa)) folds into the ADD domain. The segment at 489-519 (ICISCGSLNVTLEHPLFIGGMCQNCKNCFLE) adopts a GATA-type; atypical zinc-finger fold. Residues 490–582 (CISCGSLNVT…KEDPWNCYMC (93 aa)) form an interaction with the PRC2/EED-EZH2 complex region. The PHD-type; atypical zinc finger occupies 530-586 (QSYCTICCGGREVLMCGNNNCCRCFCVECVDLLVGPGAAQAAIKEDPWNCYMCGHKG). Positions 630 to 908 (IRVLSLFDGI…APLKEYFACV (279 aa)) constitute an SAM-dependent MTase C5-type domain. S-adenosyl-L-methionine is bound by residues 637–641 (DGIAT), Glu660, and 682–684 (DVR). The active site involves Cys706. Cys706 is modified (S-methylcysteine; by autocatalysis). 887-889 (RSW) is a binding site for S-adenosyl-L-methionine.

Belongs to the class I-like SAM-binding methyltransferase superfamily. C5-methyltransferase family. As to quaternary structure, heterotetramer composed of 1 DNMT3A homodimer and 2 DNMT3L subunits (DNMT3L-DNMT3A-DNMT3A-DNMT3L). Interacts with DNMT1 and DNMT3B. Interacts with MPHOSPH8. Interacts with histone H3 that is not methylated at 'Lys-4' (H3K4). Binds the ZBTB18 transcriptional repressor. Interacts with SETDB1. Associates with HDAC1 through its ADD domain. Interacts with UHRF1. Interacts with the PRC2/EED-EZH2 complex. Interacts with UBC9, PIAS1 and PIAS2. Interacts with SPOCD1. Interacts with ZNF263; recruited to the SIX3 promoter along with other proteins involved in chromatin modification and transcriptional corepression where it contributes to transcriptional repression. Auto-methylated at Cys-706: auto-methylation takes place in absence of DNA substrate and inactivates the DNA methyltransferase activity. Inactivation by auto-methylation may be used to inactivate unused DNA methyltransferases in the cell. In terms of processing, sumoylated; sumoylation disrupts the ability to interact with histone deacetylases (HDAC1 and HDAC2) and repress transcription. As to expression, isoform 1 is expressed ubiquitously at low levels. Expression of isoform 2 is restricted to tissues containing cells which are undergoing active de novo methylation, including spleen, testis and thymus.

Its subcellular location is the nucleus. The protein localises to the chromosome. The protein resides in the cytoplasm. The enzyme catalyses a 2'-deoxycytidine in DNA + S-adenosyl-L-methionine = a 5-methyl-2'-deoxycytidine in DNA + S-adenosyl-L-homocysteine + H(+). The catalysed reaction is L-cysteinyl-[protein] + S-adenosyl-L-methionine = S-methyl-L-cysteinyl-[protein] + S-adenosyl-L-homocysteine + H(+). Its activity is regulated as follows. Activated by binding to the regulatory factor DNMT3L. Auto-methylation at Cys-706 in absence of DNA inactivates the DNA methyltransferase activity. Functionally, required for genome-wide de novo methylation and is essential for the establishment of DNA methylation patterns during development. DNA methylation is coordinated with methylation of histones. It modifies DNA in a non-processive manner and also methylates non-CpG sites. May preferentially methylate DNA linker between 2 nucleosomal cores and is inhibited by histone H1. Plays a role in paternal and maternal imprinting. Required for methylation of most imprinted loci in germ cells. Acts as a transcriptional corepressor for ZBTB18. Recruited to trimethylated 'Lys-36' of histone H3 (H3K36me3) sites. Can actively repress transcription through the recruitment of HDAC activity. Also has weak auto-methylation activity on Cys-706 in absence of DNA. The polypeptide is DNA (cytosine-5)-methyltransferase 3A (Mus musculus (Mouse)).